A 260-amino-acid polypeptide reads, in one-letter code: MIIVLSPAKSLDYDTPAHVPSYTKPAFVDDASELIDGLRKLSPQDIATLMDISDPLARLNFQRYADWSPTFSPANAKQAVLAFNGDVYEGFDAKSLSAADLDYAQQHVRVLSGLYGLLRPLDLLQPYRLEMGTRFANARGKDLYAFWGDRITRALNEQLETRSGVARVLVNCASTEYFKSVKPKLLAAPVVTPVFEDWKGGRYKIISFHAKRARGLMARYIVENRIAEPAALKDFALEDYAFDAAASNDSTYVYRRRIGE.

This sequence belongs to the UPF0246 family.

The chain is UPF0246 protein Bamb_2261 from Burkholderia ambifaria (strain ATCC BAA-244 / DSM 16087 / CCUG 44356 / LMG 19182 / AMMD) (Burkholderia cepacia (strain AMMD)).